The primary structure comprises 444 residues: MSEMTPREIVHELDSHIIGQDKAKRSVAIALRNRWRRMQLAPELRTEVTPKNILMIGPTGVGKTEIARRLAKLANAPFIKVEATKFTEVGYVGKEVESIIRDLTDVAIKMTHQQAVEKVKFRAEEHAEDRILDILLPPARDAWGNNEEGDNDSGTRQSFRKKLREGKLDDKEIEVDVAAPQVGVEIMAPPGMEEMTNQLQGMFQNLSGGNTTKKRKMKIVDALKALTEEEGAKLVNPEELKEQAIFNVENHGIVFIDEIDKICKGSNSHSGDVSREGVQRDLLPLVEGSTVSTKHGMVKTDHMLFITSGAFQMAKPSDLIPELQGRLPIRVELEALTANDFKRILTEPNASLTEQYIALLATENVKVEFTEDGISRIAESAFQVNETTENIGARRLHTVMERLMEEISYDASEKNGESLIVDAEYVSSRLGELVADEDLSRFIL.

Residues isoleucine 18 and 60-65 (GVGKTE) contribute to the ATP site. The segment at 141–161 (DAWGNNEEGDNDSGTRQSFRK) is disordered. Residues aspartate 257, glutamate 322, and arginine 394 each contribute to the ATP site.

This sequence belongs to the ClpX chaperone family. HslU subfamily. In terms of assembly, a double ring-shaped homohexamer of HslV is capped on each side by a ring-shaped HslU homohexamer. The assembly of the HslU/HslV complex is dependent on binding of ATP.

It is found in the cytoplasm. ATPase subunit of a proteasome-like degradation complex; this subunit has chaperone activity. The binding of ATP and its subsequent hydrolysis by HslU are essential for unfolding of protein substrates subsequently hydrolyzed by HslV. HslU recognizes the N-terminal part of its protein substrates and unfolds these before they are guided to HslV for hydrolysis. The chain is ATP-dependent protease ATPase subunit HslU from Aliivibrio fischeri (strain MJ11) (Vibrio fischeri).